A 228-amino-acid chain; its full sequence is Large ribosomal subunit protein uL1 (228 aa).

The protein belongs to the universal ribosomal protein uL1 family. As to quaternary structure, part of the 50S ribosomal subunit.

Binds directly to 23S rRNA. The L1 stalk is quite mobile in the ribosome, and is involved in E site tRNA release. Its function is as follows. Protein L1 is also a translational repressor protein, it controls the translation of the L11 operon by binding to its mRNA. This is Large ribosomal subunit protein uL1 from Clavibacter sepedonicus (Clavibacter michiganensis subsp. sepedonicus).